Consider the following 645-residue polypeptide: Acetyl-coenzyme A synthetase (645 aa).

CoA contacts are provided by residues 190-193 (RGGR), threonine 309, and asparagine 333. ATP contacts are provided by residues 385–387 (GEP), 409–414 (DTWWQT), aspartate 498, and arginine 513. Serine 521 lines the CoA pocket. Arginine 524 lines the ATP pocket. The Mg(2+) site is built by valine 535, histidine 537, and valine 540. Arginine 582 is a CoA binding site. Lysine 607 bears the N6-acetyllysine mark.

The protein belongs to the ATP-dependent AMP-binding enzyme family. It depends on Mg(2+) as a cofactor. In terms of processing, acetylated. Deacetylation by the SIR2-homolog deacetylase activates the enzyme.

The catalysed reaction is acetate + ATP + CoA = acetyl-CoA + AMP + diphosphate. Functionally, catalyzes the conversion of acetate into acetyl-CoA (AcCoA), an essential intermediate at the junction of anabolic and catabolic pathways. AcsA undergoes a two-step reaction. In the first half reaction, AcsA combines acetate with ATP to form acetyl-adenylate (AcAMP) intermediate. In the second half reaction, it can then transfer the acetyl group from AcAMP to the sulfhydryl group of CoA, forming the product AcCoA. The chain is Acetyl-coenzyme A synthetase from Beijerinckia indica subsp. indica (strain ATCC 9039 / DSM 1715 / NCIMB 8712).